We begin with the raw amino-acid sequence, 612 residues long: Arginine--tRNA ligase (612 aa).

A 'HIGH' region motif is present at residues 152–162; the sequence is PNIAKEMHVGH.

Belongs to the class-I aminoacyl-tRNA synthetase family. Monomer.

It is found in the cytoplasm. The catalysed reaction is tRNA(Arg) + L-arginine + ATP = L-arginyl-tRNA(Arg) + AMP + diphosphate. This chain is Arginine--tRNA ligase, found in Prochlorococcus marinus (strain MIT 9313).